The sequence spans 337 residues: Large ribosomal subunit protein uL3 (337 aa).

Residues 1-26 are disordered; it reads MGHAHAPRRGSLGYSPRVRARSQKPK.

Belongs to the universal ribosomal protein uL3 family. In terms of assembly, part of the 50S ribosomal subunit. Forms a cluster with proteins L14 and L24e.

Its function is as follows. One of the primary rRNA binding proteins, it binds directly near the 3'-end of the 23S rRNA, where it nucleates assembly of the 50S subunit. This is Large ribosomal subunit protein uL3 from Methanocella arvoryzae (strain DSM 22066 / NBRC 105507 / MRE50).